The chain runs to 436 residues: Kynureninase (436 aa).

Residues L88, T89, 116–119, D202, H205, and Y227 contribute to the pyridoxal 5'-phosphate site; that span reads FPSD. An N6-(pyridoxal phosphate)lysine modification is found at K228. The pyridoxal 5'-phosphate site is built by W280 and N308.

This sequence belongs to the kynureninase family. In terms of assembly, homodimer. Pyridoxal 5'-phosphate serves as cofactor.

The protein localises to the cytoplasm. It catalyses the reaction L-kynurenine + H2O = anthranilate + L-alanine + H(+). It carries out the reaction 3-hydroxy-L-kynurenine + H2O = 3-hydroxyanthranilate + L-alanine + H(+). It participates in amino-acid degradation; L-kynurenine degradation; L-alanine and anthranilate from L-kynurenine: step 1/1. Its pathway is cofactor biosynthesis; NAD(+) biosynthesis; quinolinate from L-kynurenine: step 2/3. Its function is as follows. Catalyzes the cleavage of L-kynurenine (L-Kyn) and L-3-hydroxykynurenine (L-3OHKyn) into anthranilic acid (AA) and 3-hydroxyanthranilic acid (3-OHAA), respectively. This chain is Kynureninase, found in Schistosoma japonicum (Blood fluke).